The sequence spans 156 residues: Small ribosomal subunit protein uS7c (156 aa).

The protein belongs to the universal ribosomal protein uS7 family. Part of the 30S ribosomal subunit.

The protein localises to the plastid. Its subcellular location is the cyanelle. One of the primary rRNA binding proteins, it binds directly to 16S rRNA where it nucleates assembly of the head domain of the 30S subunit. The chain is Small ribosomal subunit protein uS7c (rps7) from Cyanophora paradoxa.